We begin with the raw amino-acid sequence, 431 residues long: Enolase (431 aa).

Q166 serves as a coordination point for (2R)-2-phosphoglycerate. E208 (proton donor) is an active-site residue. Mg(2+) is bound by residues D245, E289, and D316. (2R)-2-phosphoglycerate is bound by residues K341, R370, S371, and K392. The active-site Proton acceptor is the K341.

The protein belongs to the enolase family. It depends on Mg(2+) as a cofactor.

The protein resides in the cytoplasm. It is found in the secreted. Its subcellular location is the cell surface. It catalyses the reaction (2R)-2-phosphoglycerate = phosphoenolpyruvate + H2O. Its pathway is carbohydrate degradation; glycolysis; pyruvate from D-glyceraldehyde 3-phosphate: step 4/5. Catalyzes the reversible conversion of 2-phosphoglycerate (2-PG) into phosphoenolpyruvate (PEP). It is essential for the degradation of carbohydrates via glycolysis. The polypeptide is Enolase (Ruminiclostridium cellulolyticum (strain ATCC 35319 / DSM 5812 / JCM 6584 / H10) (Clostridium cellulolyticum)).